We begin with the raw amino-acid sequence, 414 residues long: Secreted beta-glucosidase sun1 (414 aa).

Positions 1–19 are cleaved as a signal peptide; sequence MKFNTVALTLATAGSLVTA. An N-linked (GlcNAc...) asparagine glycan is attached at asparagine 80. Residues 115–140 show a composition bias toward low complexity; the sequence is TSASSSETVQTPAASSSSASSSSTAT. The disordered stretch occupies residues 115 to 141; it reads TSASSSETVQTPAASSSSASSSSTATG. N-linked (GlcNAc...) asparagine glycosylation is present at asparagine 377.

It belongs to the SUN family. In terms of processing, highly glycosylated.

The protein resides in the secreted. It is found in the cell wall. Cell surface beta-glucosidase involved in cell wall biosynthesis and septation, and thus required for normal growth and correct hyphal morphogenesis. Has hydrolytic activity on linear (1-&gt;3)-beta-D-glucans such as laminaribiose and other laminarioligosaccharides. Also has a minor transferase activity. This chain is Secreted beta-glucosidase sun1 (sun1), found in Aspergillus fumigatus (strain ATCC MYA-4609 / CBS 101355 / FGSC A1100 / Af293) (Neosartorya fumigata).